A 409-amino-acid chain; its full sequence is 3-isopropylmalate dehydrogenase 1, chloroplastic (409 aa).

The N-terminal 37 residues, 1 to 37 (MAAFLQTNISLNAIKIVPGKYSSLTDHQFRAPYRIRC), are a transit peptide targeting the chloroplast. Ser-74 bears the Phosphoserine mark. Residue 118 to 133 (IGGYKWDKNEKHLRPE) coordinates NAD(+). Positions 140, 150, and 178 each coordinate substrate. Asn-238 is an NAD(+) binding site. A substrate-binding site is contributed by Asp-268. Residue Asp-268 participates in Mg(2+) binding. Residue Asn-269 coordinates NAD(+). Mg(2+)-binding residues include Asp-292 and Asp-296. 322–338 (EPIHGSAPDIAGQDKAN) serves as a coordination point for NAD(+).

This sequence belongs to the isocitrate and isopropylmalate dehydrogenases family. In terms of assembly, homodimer. Mg(2+) is required as a cofactor. It depends on Mn(2+) as a cofactor. Highly expressed in seedlings, leaves, stems and roots and, to a lower extent, in flowers, pollen and siliques.

Its subcellular location is the plastid. The protein resides in the chloroplast stroma. The catalysed reaction is (2R,3S)-3-isopropylmalate + NAD(+) = 4-methyl-2-oxopentanoate + CO2 + NADH. It participates in amino-acid biosynthesis; L-leucine biosynthesis; L-leucine from 3-methyl-2-oxobutanoate: step 3/4. It functions in the pathway secondary metabolite biosynthesis. With respect to regulation, regulated by a thiol-based redox modification; oxidation by CuCl(2) leads to a decreased activity. Involved in both glucosinolate and leucine biosynthesis; catalyzes the oxidative decarboxylation step in both leucine biosynthesis (primary metabolism) and methionine chain elongation of glucosinolates (specialized metabolism). Catalyzes the oxidation of 3-carboxy-2-hydroxy-4-methylpentanoate (3-isopropylmalate, 3-IPM) to 3-carboxy-4-methyl-2-oxopentanoate. The product decarboxylates to 4-methyl-2 oxopentanoate. Required during pollen development and involved in embryo sac development. More active on 3-isopropylmalate and NAD(+) than towards D-malate. This Arabidopsis thaliana (Mouse-ear cress) protein is 3-isopropylmalate dehydrogenase 1, chloroplastic.